A 184-amino-acid chain; its full sequence is ATP-dependent protease subunit HslV (184 aa).

T12 is an active-site residue. 3 residues coordinate Na(+): A166, C169, and T172.

The protein belongs to the peptidase T1B family. HslV subfamily. A double ring-shaped homohexamer of HslV is capped on each side by a ring-shaped HslU homohexamer. The assembly of the HslU/HslV complex is dependent on binding of ATP.

The protein localises to the cytoplasm. The catalysed reaction is ATP-dependent cleavage of peptide bonds with broad specificity.. Its activity is regulated as follows. Allosterically activated by HslU binding. Functionally, protease subunit of a proteasome-like degradation complex believed to be a general protein degrading machinery. The chain is ATP-dependent protease subunit HslV from Nitrobacter hamburgensis (strain DSM 10229 / NCIMB 13809 / X14).